Here is a 472-residue protein sequence, read N- to C-terminus: Carboxypeptidase Q (472 aa).

A signal peptide spans 1 to 20 (MRFLFFLFVAVVHLFSLGSG). The propeptide occupies 21-44 (KAIYKSGVSQRTFQEIKEEIANYE). N61 is a glycosylation site (N-linked (GlcNAc...) asparagine). Zn(2+) contacts are provided by H290 and D302. The active-site Nucleophile is the E336. E337 lines the Zn(2+) pocket. N-linked (GlcNAc...) asparagine glycosylation is present at N353. D364 contacts Zn(2+). The N-linked (GlcNAc...) asparagine glycan is linked to N396. H434 contributes to the Zn(2+) binding site.

Belongs to the peptidase M28 family. As to quaternary structure, homodimer. The monomeric form is inactive while the homodimer is active. In terms of processing, N-glycosylated. The secreted form is modified by hybrid or complex type oligosaccharide chains.

Its subcellular location is the endoplasmic reticulum. It localises to the golgi apparatus. It is found in the lysosome. The protein localises to the secreted. Carboxypeptidase that may play an important role in the hydrolysis of circulating peptides. Catalyzes the hydrolysis of dipeptides with unsubstituted terminals into amino acids. May play a role in the liberation of thyroxine hormone from its thyroglobulin (Tg) precursor. This Rattus norvegicus (Rat) protein is Carboxypeptidase Q (Cpq).